A 536-amino-acid chain; its full sequence is Chaperonin GroEL 2 (536 aa).

ATP contacts are provided by residues 29-32, 86-90, glycine 412, and aspartate 495; these read TLGP and DGTTT.

Belongs to the chaperonin (HSP60) family. Forms a cylinder of 14 subunits composed of two heptameric rings stacked back-to-back. Interacts with the co-chaperonin GroES.

Its subcellular location is the cytoplasm. The catalysed reaction is ATP + H2O + a folded polypeptide = ADP + phosphate + an unfolded polypeptide.. In terms of biological role, together with its co-chaperonin GroES, plays an essential role in assisting protein folding. The GroEL-GroES system forms a nano-cage that allows encapsulation of the non-native substrate proteins and provides a physical environment optimized to promote and accelerate protein folding. This chain is Chaperonin GroEL 2, found in Arthrobacter sp. (strain FB24).